The following is a 207-amino-acid chain: Sodium/potassium-transporting ATPase subunit beta-1-interacting protein 1 (207 aa).

3 helical membrane passes run 2–22, 35–55, and 62–82; these read GRCD…VAAL, APIL…FGTV, and LILY…IICF. Residue asparagine 100 is glycosylated (N-linked (GlcNAc...) asparagine). Residues 147 to 167 traverse the membrane as a helical segment; the sequence is VVSSALQVFLALFGFVYACYV.

Belongs to the NKAIN family. In terms of assembly, interacts with atp1b1 C-terminus.

The protein localises to the cell membrane. The sequence is that of Sodium/potassium-transporting ATPase subunit beta-1-interacting protein 1 (nkain1) from Danio rerio (Zebrafish).